The primary structure comprises 250 residues: Probable phosphatase VIBHAR_04983 (250 aa).

9 residues coordinate Zn(2+): H8, H10, H16, H41, E74, H102, H132, D194, and H196.

The protein belongs to the PHP family. Zn(2+) serves as cofactor.

This chain is Probable phosphatase VIBHAR_04983, found in Vibrio campbellii (strain ATCC BAA-1116).